We begin with the raw amino-acid sequence, 253 residues long: Imidazole glycerol phosphate synthase subunit HisF (253 aa).

Residues Asp-11 and Asp-130 contribute to the active site.

It belongs to the HisA/HisF family. In terms of assembly, heterodimer of HisH and HisF.

It is found in the cytoplasm. It carries out the reaction 5-[(5-phospho-1-deoxy-D-ribulos-1-ylimino)methylamino]-1-(5-phospho-beta-D-ribosyl)imidazole-4-carboxamide + L-glutamine = D-erythro-1-(imidazol-4-yl)glycerol 3-phosphate + 5-amino-1-(5-phospho-beta-D-ribosyl)imidazole-4-carboxamide + L-glutamate + H(+). Its pathway is amino-acid biosynthesis; L-histidine biosynthesis; L-histidine from 5-phospho-alpha-D-ribose 1-diphosphate: step 5/9. IGPS catalyzes the conversion of PRFAR and glutamine to IGP, AICAR and glutamate. The HisF subunit catalyzes the cyclization activity that produces IGP and AICAR from PRFAR using the ammonia provided by the HisH subunit. In Cereibacter sphaeroides (strain KD131 / KCTC 12085) (Rhodobacter sphaeroides), this protein is Imidazole glycerol phosphate synthase subunit HisF.